The chain runs to 215 residues: Transmembrane protein 267 (215 aa).

The next 3 helical transmembrane spans lie at 77–97 (FGEIILAGFLASVIDIDHFLL), 114–134 (FLHCSTVIPTVVLTLKFTMHF), and 178–198 (FWLYVIITSSLPHICSFVMYF).

The protein resides in the membrane. This is Transmembrane protein 267 (TMEM267) from Bos taurus (Bovine).